Reading from the N-terminus, the 206-residue chain is MAATKTASYDEHFRPEKLREWPEPESVSLMEVLAREDIDEAVCAILFKENSIVKVTVPPFVDPLFQRQQEVDEERRTGLQCETGKRHSIKELEEIEKARLHASSPYFTFTSHCVIPKEWHKASARARSKTYKYSPEKLIYADKKQKRKEKKTADLSQAAFERQFLSSKLSQKNKVGERKGLVSRGLGRGWHAGLCSTHEQHILVPE.

This sequence belongs to the FAM228 family.

In Homo sapiens (Human), this protein is Protein FAM228A (FAM228A).